The primary structure comprises 195 residues: Imidazoleglycerol-phosphate dehydratase (195 aa).

Belongs to the imidazoleglycerol-phosphate dehydratase family.

The protein localises to the cytoplasm. It catalyses the reaction D-erythro-1-(imidazol-4-yl)glycerol 3-phosphate = 3-(imidazol-4-yl)-2-oxopropyl phosphate + H2O. The protein operates within amino-acid biosynthesis; L-histidine biosynthesis; L-histidine from 5-phospho-alpha-D-ribose 1-diphosphate: step 6/9. In Paraburkholderia phytofirmans (strain DSM 17436 / LMG 22146 / PsJN) (Burkholderia phytofirmans), this protein is Imidazoleglycerol-phosphate dehydratase.